The chain runs to 227 residues: Cytidylate kinase (227 aa).

12-20 lines the ATP pocket; that stretch reads GPSGAGKGT.

The protein belongs to the cytidylate kinase family. Type 1 subfamily.

It localises to the cytoplasm. It carries out the reaction CMP + ATP = CDP + ADP. The catalysed reaction is dCMP + ATP = dCDP + ADP. This is Cytidylate kinase from Xanthomonas axonopodis pv. citri (strain 306).